An 87-amino-acid chain; its full sequence is U3-theraphotoxin-Hhn1h (87 aa).

The N-terminal stretch at 1–24 is a signal peptide; the sequence is MVNMKASMFLTFAGLVLLFVVCYA. A propeptide spanning residues 25–52 is cleaved from the precursor; sequence SESEEKEFPKEMLSSIFAVDNDSKQEER. Intrachain disulfides connect Cys-54-Cys-67, Cys-61-Cys-72, and Cys-66-Cys-79.

It belongs to the neurotoxin 10 (Hwtx-1) family. 51 (Hntx-8) subfamily. Hntx-8 sub-subfamily. As to expression, expressed by the venom gland.

Its subcellular location is the secreted. Functionally, ion channel inhibitor. This chain is U3-theraphotoxin-Hhn1h, found in Cyriopagopus hainanus (Chinese bird spider).